A 603-amino-acid chain; its full sequence is ABC transporter E family member 1 (603 aa).

4Fe-4S ferredoxin-type domains follow at residues 7 to 39 (RIAIVSEDRCKPKKCRQECKKSCPVVKTGKLCI) and 46 to 75 (KSAFISEELCIGCGICVKKCPFEAIQIINL). ABC transporter domains follow at residues 70-315 (IQII…FLAG) and 344-566 (VKSY…LSHL). Residues 110–117 (GTNGIGKS) and 381–388 (GENGTGKT) contribute to the ATP site.

Belongs to the ABC transporter superfamily. ABCE family. As to expression, expressed in roots, stems, leaves, flowers and siliques.

Its subcellular location is the membrane. The chain is ABC transporter E family member 1 (ABCE1) from Arabidopsis thaliana (Mouse-ear cress).